The chain runs to 210 residues: Pyrrolidone-carboxylate peptidase (210 aa).

Residues E80, C143, and H162 contribute to the active site.

The protein belongs to the peptidase C15 family. As to quaternary structure, homotetramer.

It is found in the cytoplasm. It carries out the reaction Release of an N-terminal pyroglutamyl group from a polypeptide, the second amino acid generally not being Pro.. Its function is as follows. Removes 5-oxoproline from various penultimate amino acid residues except L-proline. This is Pyrrolidone-carboxylate peptidase from Chromobacterium violaceum (strain ATCC 12472 / DSM 30191 / JCM 1249 / CCUG 213 / NBRC 12614 / NCIMB 9131 / NCTC 9757 / MK).